The following is a 523-amino-acid chain: Cytochrome P450 monooxygenase bsc5 (523 aa).

A helical membrane pass occupies residues Met16 to Pro36. Asn178, Asn281, and Asn403 each carry an N-linked (GlcNAc...) asparagine glycan. Cys459 serves as a coordination point for heme.

The protein belongs to the cytochrome P450 family. The cofactor is heme.

The protein resides in the membrane. It functions in the pathway mycotoxin biosynthesis. Functionally, cytochrome P450 monooxygenase; part of the gene cluster that mediates the biosynthesis of the diterpene glucoside brassicicene C. In the first step of the brassicicene C biosynthesis, the bifunctional diterpene synthase bsc8 that possesses both prenyl transferase and terpene cyclase activity, converts isopentenyl diphosphate and dimethylallyl diphosphate into geranylgeranyl diphosphate (GGDP) that is further converted into fusicocca-2,10(14)-diene, the first precursor for brassicicene C. Fusicocca-2,10(14)-diene is then substrate of cytochrome P450 monooxygenase bsc1 for hydroxylation at the C-8 position. Oxidation at C-16 position to aldehyde is then catalyzed by the cytochrome P450 monooyxygenase bsc7, yielding fusicocca-2,10(14)-diene-8-beta,16-diol. Follows the isomerization of the double bond and reduction of aldehyde to alcohol catalyzed by the short-chain dehydrogenase/reductase bsc3 to yield the diol compound fusicocca-1,10(14)-diene-8 beta,16-diol. The next step is the oxidation at the C-3 position of fusicocca-2,10(14)-diene-8-beta,16-diol catalyzed by the alpha-ketoglutarate dependent dioxygenase bsc9, to produce a triol compound. Methylation of the hydroxy group at position 16 is performed by the methyltransferase bsc6. 16-O-methylation is followed by oxidation at the C-13 position to ketone and an alkyl shift of the methyl group leads to brassicicene C. Although the probable acetyltransferase bsc4 is included in the gene cluster, no acetylation reactions are necessary for brassicicene C biosynthesis. However, the fact that brassicicene E, which is a structurally related compound having an acetoxy group at position 12, was previously isolated from another strain of A.brassicicola suggests that the ATCC 96836 strain might also produce a small amount of brassicicene E. The protein is Cytochrome P450 monooxygenase bsc5 of Alternaria brassicicola (Dark leaf spot agent).